Consider the following 326-residue polypeptide: tRNA uridine(34) hydroxylase (326 aa).

The Rhodanese domain maps to 123–217 (ADPEVFVVDT…YLEEVPQEES (95 aa)). The Cysteine persulfide intermediate role is filled by Cys-177. The segment covering 278–288 (QVERFREREKQ) has biased composition (basic and acidic residues). Residues 278–326 (QVERFREREKQVSLANQRGEQHVGGESAKQRAQRREAKLAKKAAQRKQA) are disordered. Residues 317 to 326 (AKKAAQRKQA) are compositionally biased toward basic residues.

This sequence belongs to the TrhO family.

It catalyses the reaction uridine(34) in tRNA + AH2 + O2 = 5-hydroxyuridine(34) in tRNA + A + H2O. In terms of biological role, catalyzes oxygen-dependent 5-hydroxyuridine (ho5U) modification at position 34 in tRNAs. The protein is tRNA uridine(34) hydroxylase of Vibrio parahaemolyticus serotype O3:K6 (strain RIMD 2210633).